Here is a 139-residue protein sequence, read N- to C-terminus: D-ribose pyranase (139 aa).

Residue His20 is the Proton donor of the active site. Substrate-binding positions include Asp28, His106, and 128–130 (YAN).

It belongs to the RbsD / FucU family. RbsD subfamily. In terms of assembly, homodecamer.

Its subcellular location is the cytoplasm. The enzyme catalyses beta-D-ribopyranose = beta-D-ribofuranose. Its pathway is carbohydrate metabolism; D-ribose degradation; D-ribose 5-phosphate from beta-D-ribopyranose: step 1/2. Its function is as follows. Catalyzes the interconversion of beta-pyran and beta-furan forms of D-ribose. In Haemophilus influenzae (strain 86-028NP), this protein is D-ribose pyranase.